The chain runs to 175 residues: Gamma-crystallin B (175 aa).

Beta/gamma crystallin 'Greek key' domains follow at residues 2-40 and 41-83; these read GKIT…RVES and GCWM…CLIP. A connecting peptide region spans residues 84-88; that stretch reads PHSGA. Beta/gamma crystallin 'Greek key' domains are found at residues 89-129 and 130-172; these read YRMK…NVLE and GSWI…RRVM.

This sequence belongs to the beta/gamma-crystallin family. As to quaternary structure, monomer.

In terms of biological role, crystallins are the dominant structural components of the vertebrate eye lens. The sequence is that of Gamma-crystallin B (CRYGB) from Homo sapiens (Human).